A 345-amino-acid polypeptide reads, in one-letter code: Ubiquitin-associated domain-containing protein 2 (345 aa).

Positions 1 to 35 (MFTSTGSSGLYKAPLSKSLLLVPSALSLLLALLLP) are cleaved as a signal peptide. The Extracellular segment spans residues 36–91 (HCQKLFVYDLHAVKNDFQIWRLICGRIICLDLKDTFCSSLLIYNFRIFERRYGSRK). A helical membrane pass occupies residues 92 to 112 (FASFLLGSWVLSALFDFLLVE). The Cytoplasmic portion of the chain corresponds to 113–125 (AMQYFFGITAASN). Residues 126 to 146 (LPSGFLAPVFALFVPFYCSIP) form a helical membrane-spanning segment. The Extracellular portion of the chain corresponds to 147-163 (RVQVAQILGPLSITNKT). Residue Asn-161 is glycosylated (N-linked (GlcNAc...) asparagine). The helical transmembrane segment at 164 to 184 (LIYILGLQLFTSGSYIWIVAI) threads the bilayer. Residues 185-345 (SGLMSGLCYN…NVATNFLLQH (161 aa)) lie on the Cytoplasmic side of the membrane. Positions 305-345 (EVSEEQVARLMEMGFSRGDALEALRASNNDLNVATNFLLQH) constitute a UBA domain.

As to quaternary structure, interacts with LMBR1L, FAF2, AMFR and VCP.

The protein localises to the endoplasmic reticulum membrane. In terms of biological role, restricts trafficking of FAF2 from the endoplasmic reticulum to lipid droplets. In association with LMBR1L and E3 ubiquitin-protein ligase AMFR, negatively regulates the canonical Wnt signaling pathway in the lymphocytes by promoting the ubiquitin-mediated degradation of CTNNB1 and Wnt receptors FZD6 and LRP6. The sequence is that of Ubiquitin-associated domain-containing protein 2 (UBAC2) from Macaca fascicularis (Crab-eating macaque).